Here is a 41-residue protein sequence, read N- to C-terminus: U-theraphotoxin-Lk1a (41 aa).

3 cysteine pairs are disulfide-bonded: C1-C16, C8-C21, and C15-C36.

This sequence belongs to the neurotoxin 14 (magi-1) family. 08 (Ltx-4) subfamily. Expressed by the venom gland.

The protein localises to the secreted. Its function is as follows. Toxin that causes irreversible contractile paralysis in adult Aedes aegypti resulting in 100% mortality after 24 hours. The polypeptide is U-theraphotoxin-Lk1a (Lasiodora klugi (Bahia scarlet tarantula)).